Reading from the N-terminus, the 320-residue chain is rRNA 2'-O-methyltransferase fibrillarin 2 (320 aa).

Residues 1-79 (MRPPLTGSGG…GRGGMKGGSK (79 aa)) form a disordered region. Composition is skewed to gly residues over residues 7–44 (GSGG…GGRG) and 57–76 (PPRG…GMKG). S-adenosyl-L-methionine contacts are provided by residues 167–168 (TT), 186–187 (EF), 211–212 (DA), and 231–234 (DVAQ).

Belongs to the methyltransferase superfamily. Fibrillarin family. As to quaternary structure, component of box C/D small nucleolar ribonucleoprotein (snoRNP) particles. Interacts with groundnut rosette virus long-distance movement protein; this interaction is required for virus long-distance movement protein transiting through host Cajal body and nucleolus, relocalization of fibrillarin to the cytoplasm, and in presence of viral RNA, leads to the formation of stable RNPs. Interacts (via GAR domain) with the hordeivirus TGB1 movement protein (via the first 82 amino acid residues). Interacts with PRMT11 and PRMT12. Interacts with MED19A. Methylated by PRMT11 and PRMT12. Expressed in roots and flowers. Expressed in leaves and stems. Expression levels decrease during aging.

It is found in the nucleus. Its subcellular location is the nucleolus. The enzyme catalyses a ribonucleotide in rRNA + S-adenosyl-L-methionine = a 2'-O-methylribonucleotide in rRNA + S-adenosyl-L-homocysteine + H(+). The catalysed reaction is L-glutaminyl-[histone H2A] + S-adenosyl-L-methionine = N(5)-methyl-L-glutaminyl-[histone H2A] + S-adenosyl-L-homocysteine + H(+). Its function is as follows. S-adenosyl-L-methionine-dependent methyltransferase that has the ability to methylate both RNAs and proteins. Involved in pre-rRNA processing. Utilizes the methyl donor S-adenosyl-L-methionine to catalyze the site-specific 2'-hydroxyl methylation of ribose moieties in pre-ribosomal RNA. Site specificity is provided by a guide RNA that base pairs with the substrate. Methylation occurs at a characteristic distance from the sequence involved in base pairing with the guide RNA. Also acts as a protein methyltransferase by mediating methylation of 'Gln-105' of histone H2A (H2AQ105me), a modification that impairs binding of the FACT complex and is specifically present at 35S ribosomal DNA locus. Acts as a negative regulator of expression of immune responsive genes, including pathogenesis-related gene 1 (PR1), and of resistance against bacterial pathogen. Binds to MED19A, a positive regulator of PR1 expression, to repress the activator activity of MED19A. In response to the bacterial pathogen-associated molecular pattern (PAMP) elf18, associates with the long non-coding RNA (lncRNA) ELENA1 (At4g16355), and releases its repression of MED19A. Possesses ribonuclease activity toward rRNA in vitro. Binds phosphoinositides, phospholipids and phosphatidic acid in vitro. This chain is rRNA 2'-O-methyltransferase fibrillarin 2, found in Arabidopsis thaliana (Mouse-ear cress).